A 255-amino-acid polypeptide reads, in one-letter code: Cyclic di-GMP phosphodiesterase PdeH (255 aa).

The EAL domain maps to 13–255; that stretch reads EASIESLQER…ETLNTAVLAL (243 aa).

It carries out the reaction 3',3'-c-di-GMP + H2O = 5'-phosphoguanylyl(3'-&gt;5')guanosine + H(+). Its function is as follows. Involved in the control of the switch from cell motility to adhesion via regulation of cellular levels of cyclic-di-GMP (c-di-GMP). Part of a signaling cascade that regulates curli biosynthesis. The cascade is composed of two c-di-GMP control modules, in which c-di-GMP controlled by the DgcE/PdeH pair (module I) regulates the activity of the DgcM/PdeR pair (module II), which in turn regulates activity of the transcription factor MlrA and expression of the master biofilm regulator csgD. Effect on flagella is controlled via the c-di-GMP-binding flagellar brake protein YcgR. The chain is Cyclic di-GMP phosphodiesterase PdeH from Escherichia coli (strain K12).